The chain runs to 647 residues: MINITFPDGAVREFESGVTTFEIAQSISNSLAKKALAGKFNGKLIDTTRAITEDGSIEIVTPDHEDALPILRHSAAHLFAQAARRLFPDIHLGVGPAIEDGFYYDTDNTAGQISNEDLPRIEEEMQKIVKENFPSIREEVTKDEAREIFKNDPYKLELIEEHSEDEGGLTIYRQGEYVDLCRGPHVPSTGRIQIFHLLHVAGAYWRGNSDNAMMQRIYGTAWFEKKDLKNYLQMREEAKERDHRKLGKELDLFMISQEVGQGLPFWLPNGATIRRELERYIVNKELASGYQHVYTPPLASVELYKTSGHWDHYQEDMFPTMDMGDGEEFVLRPMNCPHHIQVFKHHVHSYRELPIRIAEIGMMHRYEKSGALTGLQRVREMSLNDGHLFVTPEQIQEEFQRALQLIIDVYEDFNLTDYRFRLSLRDPQDTHKYFDNDEMWENAQTMLRAALDEMGVDYFEAEGEAAFYGPKLDIQIKTALGKEETLSTIQLDFLLPERFDLKYIGADGEDHRPVMIHRGAISTMERFTAILIENYKGAFPTWLAPHQVTLIPVSNEKHVDYAWEVAKKLRDRGVRADVDERNEKMQFKIRASQTSKIPYQLIVGDKEMEDETVNVRRYGQKETQTVSVDNFVQAILADIANKSRVEK.

Positions Met-1–Thr-61 constitute a TGS domain. Positions Asp-242–Pro-540 are catalytic. Residues Cys-336, His-387, and His-517 each coordinate Zn(2+).

This sequence belongs to the class-II aminoacyl-tRNA synthetase family. Homodimer. The cofactor is Zn(2+).

Its subcellular location is the cytoplasm. It carries out the reaction tRNA(Thr) + L-threonine + ATP = L-threonyl-tRNA(Thr) + AMP + diphosphate + H(+). Its function is as follows. Catalyzes the attachment of threonine to tRNA(Thr) in a two-step reaction: L-threonine is first activated by ATP to form Thr-AMP and then transferred to the acceptor end of tRNA(Thr). Also edits incorrectly charged L-seryl-tRNA(Thr). This is Threonine--tRNA ligase from Streptococcus pneumoniae (strain ATCC 700669 / Spain 23F-1).